The chain runs to 171 residues: Cytochrome c oxidase subunit 5b-2, mitochondrial (171 aa).

The transit peptide at 1–54 (MWRRIVSSHLKSISAVGSCAAPSCRHAVVESTHLSLSTRASSIPAYSSIFSRLI) directs the protein to the mitochondrion. Residues C121, C145, and C148 each contribute to the Zn(2+) site.

It belongs to the cytochrome c oxidase subunit 5B (TC 3.D.4.11) family.

It localises to the mitochondrion inner membrane. In terms of biological role, this protein is one of the nuclear-coded polypeptide chains of cytochrome c oxidase, the terminal oxidase in mitochondrial electron transport. In Arabidopsis thaliana (Mouse-ear cress), this protein is Cytochrome c oxidase subunit 5b-2, mitochondrial (COX5B-2).